Reading from the N-terminus, the 546-residue chain is Cyclic GMP-AMP synthase-like receptor (546 aa).

A compositionally biased stretch (polar residues) spans 1–10; sequence MPVGSRQNRV. Disordered regions lie at residues 1–116 and 134–186; these read MPVG…CASR and AKQE…RLTN. Residues 35 to 45 are compositionally biased toward basic and acidic residues; sequence YTERKERKDVQ. Low complexity predominate over residues 69–80; sequence TSRTLRQTSQSR. 2 stretches are compositionally biased toward basic and acidic residues: residues 82-95 and 145-174; these read EVLE…DCKK and KEGY…DKAT. Residues 175–186 are compositionally biased toward polar residues; it reads SHSTKGSFRLTN. Residues serine 243 and 255–257 contribute to the ATP site; that span reads EFD. 3 residues coordinate Mg(2+): glutamate 255, aspartate 257, and aspartate 374. Residues aspartate 374 and 428 to 435 contribute to the GTP site; that span reads RTSFSLAE. ATP is bound by residues 432 to 435, lysine 455, and 470 to 474; these read SLAE and SYHLK.

This sequence belongs to the mab-21 family. The cofactor is Mg(2+). Mn(2+) serves as cofactor.

The enzyme catalyses GTP + ATP = 2',3'-cGAMP + 2 diphosphate. The catalysed reaction is GTP + ATP = pppGp(2'-5')A + diphosphate. It catalyses the reaction pppGp(2'-5')A = 2',3'-cGAMP + diphosphate. Its function is as follows. Nucleotidyltransferase that catalyzes the formation of cyclic GMP-AMP (2',3'-cGAMP) from ATP and GTP and plays a key role in innate immunity. Directly binds some unknown ligand, activating the nucleotidyltransferase activity, leading to synthesis of 2',3'-cGAMP, a second messenger that binds to and activates Sting, thereby triggering the immune response via activation of the NF-kappa-B transcription factor. This is Cyclic GMP-AMP synthase-like receptor from Exaiptasia diaphana (Tropical sea anemone).